We begin with the raw amino-acid sequence, 297 residues long: Homoserine kinase (297 aa).

Residue 79–89 (PIARGLGSSGA) participates in ATP binding.

It belongs to the GHMP kinase family. Homoserine kinase subfamily.

It localises to the cytoplasm. The catalysed reaction is L-homoserine + ATP = O-phospho-L-homoserine + ADP + H(+). It participates in amino-acid biosynthesis; L-threonine biosynthesis; L-threonine from L-aspartate: step 4/5. Catalyzes the ATP-dependent phosphorylation of L-homoserine to L-homoserine phosphate. The chain is Homoserine kinase from Pyrobaculum aerophilum (strain ATCC 51768 / DSM 7523 / JCM 9630 / CIP 104966 / NBRC 100827 / IM2).